A 347-amino-acid chain; its full sequence is Phosphoribosylformylglycinamidine cyclo-ligase (347 aa).

The protein belongs to the AIR synthase family.

The protein localises to the cytoplasm. The catalysed reaction is 2-formamido-N(1)-(5-O-phospho-beta-D-ribosyl)acetamidine + ATP = 5-amino-1-(5-phospho-beta-D-ribosyl)imidazole + ADP + phosphate + H(+). The protein operates within purine metabolism; IMP biosynthesis via de novo pathway; 5-amino-1-(5-phospho-D-ribosyl)imidazole from N(2)-formyl-N(1)-(5-phospho-D-ribosyl)glycinamide: step 2/2. The chain is Phosphoribosylformylglycinamidine cyclo-ligase from Hydrogenovibrio crunogenus (strain DSM 25203 / XCL-2) (Thiomicrospira crunogena).